Consider the following 491-residue polypeptide: Putative diacyglycerol O-acyltransferase MT2557 (491 aa).

The Proton acceptor role is filled by His-145.

This sequence belongs to the long-chain O-acyltransferase family.

It carries out the reaction an acyl-CoA + a 1,2-diacyl-sn-glycerol = a triacyl-sn-glycerol + CoA. The protein operates within glycerolipid metabolism; triacylglycerol biosynthesis. This Mycobacterium tuberculosis (strain CDC 1551 / Oshkosh) protein is Putative diacyglycerol O-acyltransferase MT2557.